The sequence spans 287 residues: Formamidopyrimidine-DNA glycosylase (287 aa).

The active-site Schiff-base intermediate with DNA is Pro2. Catalysis depends on Glu3, which acts as the Proton donor. The active-site Proton donor; for beta-elimination activity is Lys58. Residues His104, Arg123, and Arg166 each coordinate DNA. An FPG-type zinc finger spans residues 251-287 (RVYDREGEPCPTPACKGVIAREVQAGRSTFFCPVCQV). The Proton donor; for delta-elimination activity role is filled by Arg277.

This sequence belongs to the FPG family. In terms of assembly, monomer. Zn(2+) is required as a cofactor.

The enzyme catalyses Hydrolysis of DNA containing ring-opened 7-methylguanine residues, releasing 2,6-diamino-4-hydroxy-5-(N-methyl)formamidopyrimidine.. It catalyses the reaction 2'-deoxyribonucleotide-(2'-deoxyribose 5'-phosphate)-2'-deoxyribonucleotide-DNA = a 3'-end 2'-deoxyribonucleotide-(2,3-dehydro-2,3-deoxyribose 5'-phosphate)-DNA + a 5'-end 5'-phospho-2'-deoxyribonucleoside-DNA + H(+). In terms of biological role, involved in base excision repair of DNA damaged by oxidation or by mutagenic agents. Acts as a DNA glycosylase that recognizes and removes damaged bases. Has a preference for oxidized purines, such as 7,8-dihydro-8-oxoguanine (8-oxoG). Has AP (apurinic/apyrimidinic) lyase activity and introduces nicks in the DNA strand. Cleaves the DNA backbone by beta-delta elimination to generate a single-strand break at the site of the removed base with both 3'- and 5'-phosphates. In Caulobacter vibrioides (strain ATCC 19089 / CIP 103742 / CB 15) (Caulobacter crescentus), this protein is Formamidopyrimidine-DNA glycosylase.